Here is a 936-residue protein sequence, read N- to C-terminus: Isoleucine--tRNA ligase (936 aa).

The 'HIGH' region motif lies at 58–68; that stretch reads PYANGRAHLGT. E561 contacts L-isoleucyl-5'-AMP. A 'KMSKS' region motif is present at residues 602-606; it reads KMSKS. K605 is a binding site for ATP. Residues C899, C902, C919, and C922 each coordinate Zn(2+).

It belongs to the class-I aminoacyl-tRNA synthetase family. IleS type 1 subfamily. Monomer. The cofactor is Zn(2+).

It localises to the cytoplasm. It catalyses the reaction tRNA(Ile) + L-isoleucine + ATP = L-isoleucyl-tRNA(Ile) + AMP + diphosphate. Its function is as follows. Catalyzes the attachment of isoleucine to tRNA(Ile). As IleRS can inadvertently accommodate and process structurally similar amino acids such as valine, to avoid such errors it has two additional distinct tRNA(Ile)-dependent editing activities. One activity is designated as 'pretransfer' editing and involves the hydrolysis of activated Val-AMP. The other activity is designated 'posttransfer' editing and involves deacylation of mischarged Val-tRNA(Ile). The polypeptide is Isoleucine--tRNA ligase (Coxiella burnetii (strain CbuK_Q154) (Coxiella burnetii (strain Q154))).